Reading from the N-terminus, the 382-residue chain is Methylthioribose-1-phosphate isomerase (382 aa).

Residue aspartate 261 is the Proton donor of the active site.

The protein belongs to the eIF-2B alpha/beta/delta subunits family. MtnA subfamily.

It is found in the cytoplasm. Its subcellular location is the nucleus. It catalyses the reaction 5-(methylsulfanyl)-alpha-D-ribose 1-phosphate = 5-(methylsulfanyl)-D-ribulose 1-phosphate. The protein operates within amino-acid biosynthesis; L-methionine biosynthesis via salvage pathway; L-methionine from S-methyl-5-thio-alpha-D-ribose 1-phosphate: step 1/6. Catalyzes the interconversion of methylthioribose-1-phosphate (MTR-1-P) into methylthioribulose-1-phosphate (MTRu-1-P). This Ricinus communis (Castor bean) protein is Methylthioribose-1-phosphate isomerase.